Here is a 251-residue protein sequence, read N- to C-terminus: Ribosomal RNA small subunit methyltransferase J (251 aa).

Residues 100–101, 116–117, and aspartate 170 contribute to the S-adenosyl-L-methionine site; these read RD and ER.

The protein belongs to the methyltransferase superfamily. RsmJ family.

Its subcellular location is the cytoplasm. The catalysed reaction is guanosine(1516) in 16S rRNA + S-adenosyl-L-methionine = N(2)-methylguanosine(1516) in 16S rRNA + S-adenosyl-L-homocysteine + H(+). Functionally, specifically methylates the guanosine in position 1516 of 16S rRNA. The chain is Ribosomal RNA small subunit methyltransferase J from Actinobacillus pleuropneumoniae serotype 5b (strain L20).